A 267-amino-acid chain; its full sequence is Indole-3-glycerol phosphate synthase (267 aa).

Belongs to the TrpC family.

The catalysed reaction is 1-(2-carboxyphenylamino)-1-deoxy-D-ribulose 5-phosphate + H(+) = (1S,2R)-1-C-(indol-3-yl)glycerol 3-phosphate + CO2 + H2O. The protein operates within amino-acid biosynthesis; L-tryptophan biosynthesis; L-tryptophan from chorismate: step 4/5. The chain is Indole-3-glycerol phosphate synthase from Polynucleobacter asymbioticus (strain DSM 18221 / CIP 109841 / QLW-P1DMWA-1) (Polynucleobacter necessarius subsp. asymbioticus).